The primary structure comprises 860 residues: Alanine--tRNA ligase (860 aa).

H563, H567, C665, and H669 together coordinate Zn(2+).

The protein belongs to the class-II aminoacyl-tRNA synthetase family. Requires Zn(2+) as cofactor.

Its subcellular location is the cytoplasm. The catalysed reaction is tRNA(Ala) + L-alanine + ATP = L-alanyl-tRNA(Ala) + AMP + diphosphate. Catalyzes the attachment of alanine to tRNA(Ala) in a two-step reaction: alanine is first activated by ATP to form Ala-AMP and then transferred to the acceptor end of tRNA(Ala). Also edits incorrectly charged Ser-tRNA(Ala) and Gly-tRNA(Ala) via its editing domain. The chain is Alanine--tRNA ligase from Vibrio cholerae serotype O1 (strain ATCC 39541 / Classical Ogawa 395 / O395).